Reading from the N-terminus, the 638-residue chain is MRRSSVTNRQSLLPLRVQDANRMGLTTPQNKDRQGFGKLSMSKPHSGTSEKKTSFFGKRASNGTARTSQYGAFGGTEKIKDPRPLHDKAFIQQCIRQLCEFLNENGYSQALTVKSLQGPSTKDFLKIFAFIYTFICPNYENPESKFEEEIPRIFKELGYPFALSKSSMYTVGAPHTWPQIVAALVWLIDCVKLCCVLRSENPVFEDPPMGEQSENGIDFNQLFLDYTVRCYDQFMEGRDTFEEYDTDVCIRLKEAYHVDESNLEALQQESRRLMEEIERLEKEKENEPDRLASMRKLKASLQADIQKYQNYLTEIESHSTLLDQRVSSISEELEATELESRAIQQENLRLKNILDNQKYSVADIERIKYEETELQQTIAKLTKDLDEDKQQLWHEELKYAKMKESVETQLSEFHKIGRKVRLIPPTAEFANGYDFQIQCNLDSEQSSLMHYRNKINVPLVEILSQSEGHIASSTNKKMGVEDMVEQLNTLIGEKKNEVKVQKDEAQKLEEIYQQKVEESEEHEKRWISEIESLEKHRQLLESGVNKSLDEAMKDLQKEQQELQLVEHRTEEEMRQVENKLVRVVHAVANHVAVIEKHLEEKRLKVEREYEEFMKEDLLLDLRELLEKYKEKARVLDSL.

A compositionally biased stretch (polar residues) spans 1–11; it reads MRRSSVTNRQS. Residues 1 to 55 are disordered; sequence MRRSSVTNRQSLLPLRVQDANRMGLTTPQNKDRQGFGKLSMSKPHSGTSEKKTSF. 2 coiled-coil regions span residues 249 to 394 and 479 to 638; these read CIRL…QLWH and GVED…LDSL.

It belongs to the NDC80/HEC1 family. In terms of assembly, component of the NDC80 complex, which is composed of ndc80, cdca1, spbc24 and spbc25. The NDC80 complex interacts with mis12 and zwint. Interacts with cep57r.

It localises to the nucleus. Its subcellular location is the chromosome. The protein resides in the centromere. The protein localises to the kinetochore. Its function is as follows. Acts as a component of the essential kinetochore-associated NDC80 complex, which is required for chromosome segregation and spindle checkpoint activity. Required for kinetochore integrity and the organization of stable microtubule binding sites in the outer plate of the kinetochore. The NDC80 complex synergistically enhances the affinity of the SKA1 complex for microtubules and may allow the NDC80 complex to track depolymerizing microtubules. May play a role in chromosome congression and may be essential for the end-on attachment of the kinetochores to spindle microtubules. This is Kinetochore protein NDC80 homolog (ndc80) from Xenopus laevis (African clawed frog).